Consider the following 197-residue polypeptide: DnaJ homolog subfamily C member 5 (197 aa).

Positions 13–82 (GESLYHVLGL…RNIYDKYGSL (70 aa)) constitute a J domain. Residues 153–197 (EDLEAQMQSDERDTEGPVLVQPASATETTQLTSDSHASYHTDGFN) are disordered. The span at 175–197 (ASATETTQLTSDSHASYHTDGFN) shows a compositional bias: polar residues.

Palmitoylated. Palmitoylation occurs probably in the cysteine-rich domain and regulates DNAJC5 stable membrane attachment.

Its subcellular location is the cytoplasm. It localises to the cytosol. It is found in the membrane. The protein resides in the cytoplasmic vesicle. The protein localises to the secretory vesicle. Its subcellular location is the chromaffin granule membrane. It localises to the melanosome. It is found in the cell membrane. Functionally, may have an important role in presynaptic function. May be involved in calcium-dependent neurotransmitter release at nerve endings. This Xenopus laevis (African clawed frog) protein is DnaJ homolog subfamily C member 5.